The primary structure comprises 344 residues: Heat-inducible transcription repressor HrcA (344 aa).

Belongs to the HrcA family.

In terms of biological role, negative regulator of class I heat shock genes (grpE-dnaK-dnaJ and groELS operons). Prevents heat-shock induction of these operons. This Anoxybacillus flavithermus (strain DSM 21510 / WK1) protein is Heat-inducible transcription repressor HrcA.